The following is a 237-amino-acid chain: 2-C-methyl-D-erythritol 4-phosphate cytidylyltransferase (237 aa).

This sequence belongs to the IspD/TarI cytidylyltransferase family. IspD subfamily. As to quaternary structure, homodimer.

It catalyses the reaction 2-C-methyl-D-erythritol 4-phosphate + CTP + H(+) = 4-CDP-2-C-methyl-D-erythritol + diphosphate. The protein operates within isoprenoid biosynthesis; isopentenyl diphosphate biosynthesis via DXP pathway; isopentenyl diphosphate from 1-deoxy-D-xylulose 5-phosphate: step 2/6. In terms of biological role, catalyzes the formation of 4-diphosphocytidyl-2-C-methyl-D-erythritol from CTP and 2-C-methyl-D-erythritol 4-phosphate (MEP). The sequence is that of 2-C-methyl-D-erythritol 4-phosphate cytidylyltransferase from Pectobacterium atrosepticum (strain SCRI 1043 / ATCC BAA-672) (Erwinia carotovora subsp. atroseptica).